The primary structure comprises 371 residues: Protein NDRG2 (371 aa).

The disordered stretch occupies residues 1 to 21 (MAELQEVQITEEKPLLPGQTP). Position 2 is an N-acetylalanine (alanine 2). Phosphothreonine is present on threonine 20. Serine 326 and serine 328 each carry phosphoserine. Position 330 is a phosphothreonine (threonine 330). Serine 332 is modified (phosphoserine). The residue at position 334 (threonine 334) is a Phosphothreonine. Residues 334–371 (TSAASVDGNRSRSRTLSQSSESGTLSSGPPGHTMEVSC) are disordered. Phosphoserine occurs at positions 335, 338, and 344. Residues 347-361 (RTLSQSSESGTLSSG) show a composition bias toward low complexity. Residue threonine 348 is modified to Phosphothreonine. Phosphoserine is present on residues serine 350, serine 352, serine 353, and serine 355. Phosphothreonine is present on threonine 357. A Phosphoserine modification is found at serine 370.

It belongs to the NDRG family. As to quaternary structure, interacts with CTNNB1.

Its subcellular location is the cytoplasm. It is found in the perinuclear region. The protein localises to the cell projection. It localises to the growth cone. Contributes to the regulation of the Wnt signaling pathway. Down-regulates CTNNB1-mediated transcriptional activation of target genes, such as CCND1, and may thereby act as tumor suppressor. May be involved in dendritic cell and neuron differentiation. This Pongo abelii (Sumatran orangutan) protein is Protein NDRG2 (NDRG2).